A 315-amino-acid chain; its full sequence is Mitochondrial glutamate carrier 2 (315 aa).

Solcar repeat units follow at residues 6–92 (LSIT…FRRL), 100–210 (RNLK…LNNL), and 219–308 (ASFA…GIGE). Transmembrane regions (helical) follow at residues 12–32 (LINGGVAGLVGVTCVFPIDLA), 61–81 (FFGMYRGAAVNLTLVTPEKAI), and 106–126 (MLAGCGAGMCQVVVTCPMEML). Residues 141-160 (QGSASAPSTSRSYTTGSAST) form a disordered region. Positions 142–159 (GSASAPSTSRSYTTGSAS) are enriched in polar residues. S145 carries the post-translational modification Phosphoserine. The next 3 helical transmembrane spans lie at 185–205 (GLGATLLRDIPFSIIYFPLFA), 225–245 (FVSGCVAGSIAAVAVTPLDVL), and 288–308 (ALVIAPLFGIAQGVYFIGIGE).

The protein belongs to the mitochondrial carrier (TC 2.A.29) family. In terms of tissue distribution, expressed in brain, to a lesser extent in testis, and poorly in all the other tissues.

It localises to the mitochondrion inner membrane. It carries out the reaction L-glutamate(in) + H(+)(in) = L-glutamate(out) + H(+)(out). Its function is as follows. Responsible for the transport of glutamate from the cytosol into the mitochondrial matrix with the concomitant import of a proton (symport system). The sequence is that of Mitochondrial glutamate carrier 2 from Homo sapiens (Human).